A 168-amino-acid polypeptide reads, in one-letter code: Regulatory protein RecX (168 aa).

Belongs to the RecX family.

Its subcellular location is the cytoplasm. Modulates RecA activity. The chain is Regulatory protein RecX from Serratia proteamaculans (strain 568).